The following is an 87-amino-acid chain: Small ribosomal subunit protein uS15c (87 aa).

The protein belongs to the universal ribosomal protein uS15 family. As to quaternary structure, part of the 30S ribosomal subunit.

It is found in the plastid. The protein resides in the chloroplast. This is Small ribosomal subunit protein uS15c (rps15) from Nicotiana tabacum (Common tobacco).